The primary structure comprises 118 residues: Cell division protein FtsB (118 aa).

The Cytoplasmic portion of the chain corresponds to 1–6; the sequence is MRNWRW. The helical transmembrane segment at 7–24 threads the bilayer; the sequence is LLLVLAALLAWLQHRFWF. Residues 25-118 lie on the Periplasmic side of the membrane; sequence GPGNSGEVRM…DLSQPRREKR (94 aa). A coiled-coil region spans residues 30–66; sequence GEVRMLQVQIVQQHQENERLRQRNASLAAEVKNLKDG. Residues 98–118 are disordered; sequence LPNDTSADHGVDLSQPRREKR. Residues 103–118 are compositionally biased toward basic and acidic residues; the sequence is SADHGVDLSQPRREKR.

This sequence belongs to the FtsB family. As to quaternary structure, part of a complex composed of FtsB, FtsL and FtsQ.

It is found in the cell inner membrane. In terms of biological role, essential cell division protein. May link together the upstream cell division proteins, which are predominantly cytoplasmic, with the downstream cell division proteins, which are predominantly periplasmic. This is Cell division protein FtsB from Xylella fastidiosa (strain M23).